Here is a 309-residue protein sequence, read N- to C-terminus: D-alanine--D-alanine ligase (309 aa).

Positions K104–E306 constitute an ATP-grasp domain. Residue I137–T192 participates in ATP binding. Residues D260, E273, and N275 each coordinate Mg(2+).

Belongs to the D-alanine--D-alanine ligase family. Requires Mg(2+) as cofactor. The cofactor is Mn(2+).

The protein localises to the cytoplasm. It catalyses the reaction 2 D-alanine + ATP = D-alanyl-D-alanine + ADP + phosphate + H(+). The protein operates within cell wall biogenesis; peptidoglycan biosynthesis. In terms of biological role, cell wall formation. The protein is D-alanine--D-alanine ligase of Buchnera aphidicola subsp. Baizongia pistaciae (strain Bp).